The primary structure comprises 241 residues: Glutathione S-transferase omega-1 (241 aa).

N-acetylserine is present on S2. Residues 22–101 form the GST N-terminal domain; sequence GQIRVYSMRF…YLDEAYPEKK (80 aa). The active-site Nucleophile is C32. K57 carries the N6-acetyllysine modification. Glutathione-binding positions include K59, V72, and 85 to 86; that span reads ES. In terms of domain architecture, GST C-terminal spans 106 to 228; it reads DPYEKACQKM…AKTYRDYLSL (123 aa). S129 is subject to Phosphoserine. K143, K148, and K152 each carry N6-acetyllysine.

Belongs to the GST superfamily. Omega family. In terms of assembly, homodimer.

It is found in the cytoplasm. Its subcellular location is the cytosol. It carries out the reaction RX + glutathione = an S-substituted glutathione + a halide anion + H(+). The enzyme catalyses L-dehydroascorbate + 2 glutathione = glutathione disulfide + L-ascorbate. It catalyses the reaction methylarsonate + 2 glutathione + H(+) = methylarsonous acid + glutathione disulfide + H2O. In terms of biological role, exhibits glutathione-dependent thiol transferase and dehydroascorbate reductase activities. Has S-(phenacyl)glutathione reductase activity. Also has glutathione S-transferase activity. Participates in the biotransformation of inorganic arsenic and reduces monomethylarsonic acid (MMA) and dimethylarsonic acid. This is Glutathione S-transferase omega-1 (Gsto1) from Rattus norvegicus (Rat).